We begin with the raw amino-acid sequence, 491 residues long: Sodium-dependent glucose transporter 1 (491 aa).

11 helical membrane passes run 26-46 (FIFV…GILF), 52-72 (HLLL…VPWC), 81-101 (VMSV…IIIL), 119-139 (FALG…FLPL), 165-185 (LSYI…FILF), 210-230 (AVIF…VAYG), 255-275 (LFWG…TCLY), 277-297 (GTML…LVLF), 303-323 (LLWV…PSGF), 338-358 (SLFV…VGYL), and 365-385 (FPVL…LFPV). 2 disordered regions span residues 397–425 (AQYN…DEAQ) and 438–491 (NDQM…EKND). Acidic residues predominate over residues 416-425 (MEEEDEDEAQ). Residues 440–458 (QMKNSVTVISEDTPGNSAP) are compositionally biased toward polar residues.

It belongs to the major facilitator superfamily.

The protein localises to the apical cell membrane. Functionally, may function as a sodium-dependent glucose transporter. Potential channels for urea in the inner medulla of kidney. The protein is Sodium-dependent glucose transporter 1 (mfsd4b) of Xenopus laevis (African clawed frog).